A 53-amino-acid chain; its full sequence is Large ribosomal subunit protein bL32 (53 aa).

A disordered region spans residues 1 to 27 (MAVQQNKKSRSRRDMRRSHDALTTAAV). The segment covering 7–16 (KKSRSRRDMR) has biased composition (basic residues).

Belongs to the bacterial ribosomal protein bL32 family.

The sequence is that of Large ribosomal subunit protein bL32 from Glaesserella parasuis serovar 5 (strain SH0165) (Haemophilus parasuis).